Here is a 332-residue protein sequence, read N- to C-terminus: Ferredoxin--NADP reductase (332 aa).

Positions 33, 41, 46, 86, 121, 282, and 325 each coordinate FAD.

Belongs to the ferredoxin--NADP reductase type 2 family. In terms of assembly, homodimer. FAD is required as a cofactor.

The enzyme catalyses 2 reduced [2Fe-2S]-[ferredoxin] + NADP(+) + H(+) = 2 oxidized [2Fe-2S]-[ferredoxin] + NADPH. The protein is Ferredoxin--NADP reductase of Sulfurisphaera tokodaii (strain DSM 16993 / JCM 10545 / NBRC 100140 / 7) (Sulfolobus tokodaii).